A 476-amino-acid chain; its full sequence is UDP-N-acetylmuramate--L-alanine ligase (476 aa).

123 to 129 contacts ATP; that stretch reads GTHGKTT.

This sequence belongs to the MurCDEF family.

It is found in the cytoplasm. The catalysed reaction is UDP-N-acetyl-alpha-D-muramate + L-alanine + ATP = UDP-N-acetyl-alpha-D-muramoyl-L-alanine + ADP + phosphate + H(+). Its pathway is cell wall biogenesis; peptidoglycan biosynthesis. Its function is as follows. Cell wall formation. The chain is UDP-N-acetylmuramate--L-alanine ligase from Nitrosococcus oceani (strain ATCC 19707 / BCRC 17464 / JCM 30415 / NCIMB 11848 / C-107).